Reading from the N-terminus, the 367-residue chain is Alpha-2-HS-glycoprotein (367 aa).

An N-terminal signal peptide occupies residues 1–18 (MKSLVLLLCLAQLWGCHS). The 107-residue stretch at 27-133 (YRQPNCDDPE…KFSVVYAKCD (107 aa)) folds into the Cystatin fetuin-A-type 1 domain. Cystine bridges form between C32–C358, C89–C100, C114–C132, C146–C149, C208–C219, and C230–C247. The residue at position 134 (S134) is a Phosphoserine. 2 positions are modified to phosphoserine; by FAM20C: S135 and S138. Residues 144-255 (KVCQDCPLLA…TCMVFQTQPV (112 aa)) form the Cystatin fetuin-A-type 2 domain. N-linked (GlcNAc...) (complex) asparagine glycans are attached at residues N156 and N176. Residues 255–298 (VSSQPQPEGANEAVPTPVVDPDAPPSPPLGAPGLPPAGSPPDSH) are disordered. O-linked (GalNAc...) threonine glycosylation occurs at T270. A compositionally biased stretch (pro residues) spans 276–293 (DAPPSPPLGAPGLPPAGS). O-linked (GalNAc...) serine glycans are attached at residues S280 and S293. A propeptide spans 301 to 340 (LAAPPGHQLHRAHYDLRHTFMGVVSLGSPSGEVSHPRKTR) (connecting peptide). T319 carries the post-translational modification Phosphothreonine; by FAM20C. S325, S328, and S330 each carry phosphoserine; by FAM20C. O-linked (GalNAc...) threonine glycosylation is found at T339 and T341. S346 is a glycosylation site (O-linked (GalNAc...) serine).

It belongs to the fetuin family. In terms of assembly, alpha-2-HS glycoprotein derives from this precursor, when the connecting peptide is cleaved off. The two chains A and B are held together by a single disulfide bond. Phosphorylated by FAM20C in the extracellular medium. In terms of processing, O- and N-glycosylated. O-glycosylated with core 1 or possibly core 8 glycans. N-glycan at Asn-156: Hex5HexNAc4; N-glycan heterogeneity at Asn-176: Hex5HexNAc4 (major) and Hex6HexNAc5 (minor). Synthesized in liver and selectively concentrated in bone matrix. Secreted in plasma. It is also found in dentin in much higher quantities than other plasma proteins.

The protein localises to the secreted. Its function is as follows. Promotes endocytosis, possesses opsonic properties and influences the mineral phase of bone. Shows affinity for calcium and barium ions. This Homo sapiens (Human) protein is Alpha-2-HS-glycoprotein (AHSG).